The sequence spans 532 residues: Transcriptional regulatory protein RtcR (532 aa).

The Sigma-54 factor interaction domain maps to 186–424; that stretch reads IATRNPHFNR…LSASVTRMAT (239 aa). Residues 215–222 and 281–290 each bind ATP; these read GPTGAGKS and ANGGMLFLDE. A DNA-binding region (H-T-H motif) is located at residues 485 to 504; the sequence is KSLSAAGRQLFDVSRQGKAS.

Functionally, transcriptional repressor of the rtcAB genes. Interacts with sigma-54. This is Transcriptional regulatory protein RtcR (rtcR) from Escherichia coli (strain K12).